Reading from the N-terminus, the 620-residue chain is Chaperone protein HscA homolog (620 aa).

Belongs to the heat shock protein 70 family.

Its function is as follows. Chaperone involved in the maturation of iron-sulfur cluster-containing proteins. Has a low intrinsic ATPase activity which is markedly stimulated by HscB. The chain is Chaperone protein HscA homolog from Shewanella loihica (strain ATCC BAA-1088 / PV-4).